The following is a 102-amino-acid chain: uncharacterized protein (102 aa).

This is an uncharacterized protein from Haemophilus influenzae (strain ATCC 51907 / DSM 11121 / KW20 / Rd).